The sequence spans 205 residues: Large ribosomal subunit protein uL4 (205 aa).

The interval 44-79 (RAGTKAQKTRREVSGSGAKPWRQKGTGRARAGSSRS) is disordered.

It belongs to the universal ribosomal protein uL4 family. As to quaternary structure, part of the 50S ribosomal subunit.

In terms of biological role, one of the primary rRNA binding proteins, this protein initially binds near the 5'-end of the 23S rRNA. It is important during the early stages of 50S assembly. It makes multiple contacts with different domains of the 23S rRNA in the assembled 50S subunit and ribosome. Forms part of the polypeptide exit tunnel. This chain is Large ribosomal subunit protein uL4, found in Coxiella burnetii (strain Dugway 5J108-111).